Reading from the N-terminus, the 226-residue chain is MIETISKTIKYHFKNPQLLHEALTHPSIISKDSLKFNYERLEFLGDAVLNIVISEMLFNIFPKDTEGNLAKKKTALVCGNQLVKVAQSINLGQFIIMSDGERTCGGANNHNNLENALEALIGAIYLDGGLTAAQNFIHSFWKHTAIHMDIPPQDAKTILQEFIQGKRLPAPTYHIIDKSGPDHNPIFTVELRIPLYKTIQATGNNKKLAEQKAASLMLNQIKDQIK.

Residues 2–129 (IETISKTIKY…LIGAIYLDGG (128 aa)) enclose the RNase III domain. Mg(2+) is bound at residue Glu42. The active site involves Asp46. Mg(2+) is bound by residues Asn115 and Glu118. The active site involves Glu118. The DRBM domain occupies 154 to 223 (DAKTILQEFI…ASLMLNQIKD (70 aa)).

The protein belongs to the ribonuclease III family. Homodimer. Requires Mg(2+) as cofactor.

The protein localises to the cytoplasm. The catalysed reaction is Endonucleolytic cleavage to 5'-phosphomonoester.. Digests double-stranded RNA. Involved in the processing of primary rRNA transcript to yield the immediate precursors to the large and small rRNAs (23S and 16S). Processes some mRNAs, and tRNAs when they are encoded in the rRNA operon. Processes pre-crRNA and tracrRNA of type II CRISPR loci if present in the organism. In Ehrlichia canis (strain Jake), this protein is Ribonuclease 3.